Here is a 236-residue protein sequence, read N- to C-terminus: Small ribosomal subunit protein uS2c (236 aa).

Belongs to the universal ribosomal protein uS2 family.

It localises to the plastid. It is found in the chloroplast. This is Small ribosomal subunit protein uS2c (rps2) from Coffea arabica (Arabian coffee).